Consider the following 473-residue polypeptide: Cardiolipin synthase C (473 aa).

PLD phosphodiesterase domains follow at residues 125-152 (LNRR…GDAY) and 364-391 (SGAS…DPRS). Catalysis depends on residues His130, Lys132, Asp137, His369, Lys371, and Asp376.

This sequence belongs to the phospholipase D family. Cardiolipin synthase subfamily. ClsC sub-subfamily.

It carries out the reaction a 1,2-diacyl-sn-glycero-3-phospho-(1'-sn-glycerol) + a 1,2-diacyl-sn-glycero-3-phosphoethanolamine = a cardiolipin + ethanolamine. Full activity requires coexpression with the neighboring gene ymdB. In terms of biological role, catalyzes the synthesis of cardiolipin (CL) (diphosphatidylglycerol) from phosphatidylglycerol (PG) and phosphatidylethanolamine (PE). This chain is Cardiolipin synthase C, found in Escherichia coli (strain K12).